A 417-amino-acid polypeptide reads, in one-letter code: Phosphoglycerate kinase 1 (417 aa).

Serine 2 bears the N-acetylserine mark. A phosphoserine mark is found at serine 2 and serine 4. Lysine 6 is modified (N6-succinyllysine). Lysine 11 is subject to N6-acetyllysine. (2R)-3-phosphoglycerate contacts are provided by valine 23, aspartate 24, phenylalanine 25, asparagine 26, glutamine 38, and arginine 39. Positions 38–43 (QRIKAA) are mitochondrial targeting region exposed following cis-trans isomerization by PIN1 and recognized by the TOM complex for mitochondrial translocation of the protein. Lysine 48 is subject to N6-acetyllysine; alternate. Residue lysine 48 is modified to N6-succinyllysine; alternate. (2R)-3-phosphoglycerate-binding residues include serine 62, histidine 63, glycine 65, and arginine 66. At lysine 75 the chain carries N6-acetyllysine. Tyrosine 76 is subject to Phosphotyrosine. 2 positions are modified to N6-acetyllysine: lysine 86 and lysine 91. The residue at position 97 (lysine 97) is an N6-acetyllysine; alternate. An N6-(2-hydroxyisobutyryl)lysine; alternate modification is found at lysine 97. Positions 122 and 123 each coordinate (2R)-3-phosphoglycerate. Lysine 131 carries the post-translational modification N6-acetyllysine; alternate. N6-malonyllysine; alternate is present on lysine 131. Lysine 146 is modified (N6-acetyllysine). Histidine 170 and arginine 171 together coordinate (2R)-3-phosphoglycerate. Lysine 191 is modified (N6-succinyllysine). Tyrosine 196 carries the phosphotyrosine modification. Lysine 199 carries the post-translational modification N6-acetyllysine. Serine 203 carries the post-translational modification Phosphoserine. Residue glycine 214 participates in ADP binding. CDP is bound at residue glycine 214. Residues alanine 215 and lysine 216 each contribute to the AMP site. ATP is bound at residue alanine 215. Alanine 215 is a binding site for Mg(2+). Lysine 216 carries the post-translational modification N6-(2-hydroxyisobutyryl)lysine. Residues alanine 218 and aspartate 219 each contribute to the Mg(2+) site. Aspartate 219 contributes to the CDP binding site. Residue lysine 220 coordinates AMP. Residue lysine 220 coordinates ATP. Lysine 220 bears the N6-(2-hydroxyisobutyryl)lysine mark. Glycine 238 serves as a coordination point for ADP. Position 238 (glycine 238) interacts with CDP. Glycine 239 contributes to the AMP binding site. Glycine 239 contacts ATP. An N6-acetyllysine mark is found at lysine 267 and lysine 291. Glycine 313 contacts AMP. Glycine 313 lines the ATP pocket. The residue at position 323 (lysine 323) is an N6-(2-hydroxyisobutyryl)lysine. Residues glycine 338, valine 340, and phenylalanine 343 each coordinate CDP. Phenylalanine 343 lines the ADP pocket. AMP is bound at residue glutamate 344. Glutamate 344 is a binding site for ATP. Lysine 361 bears the N6-acetyllysine mark. Aspartate 375 and threonine 376 together coordinate ATP. Residue aspartate 375 coordinates Mg(2+).

Belongs to the phosphoglycerate kinase family. Monomer. Interacts with kinase MAPK1/ERK2; the interaction is direct, occurs under hypoxic conditions, and promotes its interaction with PIN1. Interacts with peptidyl-prolyl cis-trans isomerase PIN1; the interaction is direct, occurs under hypoxic conditions, and targets the protein to the mitochondrion by promoting interactions with the TOM complex. Interacts with mitochondrial circRNA mcPGK1 (via its 2nd stem-loop); the interaction is direct and targets the protein to the mitochondrion by promoting interactions with the TOM complex. Interacts with pyruvate dehydrogenase kinase PDK1; the interaction is direct, occurs under hypoxic conditions and leads to PDK1-mediated inhibition of pyruvate dehydrogenase complex activity. It depends on Mg(2+) as a cofactor. Phosphorylated at Ser-203 by MAPK1/ERK2 under hypoxic conditions, which promotes its mitochondrial targeting.

It is found in the cytoplasm. The protein resides in the cytosol. It localises to the mitochondrion matrix. The enzyme catalyses (2R)-3-phosphoglycerate + ATP = (2R)-3-phospho-glyceroyl phosphate + ADP. It catalyses the reaction L-seryl-[protein] + ATP = O-phospho-L-seryl-[protein] + ADP + H(+). It functions in the pathway carbohydrate degradation; glycolysis; pyruvate from D-glyceraldehyde 3-phosphate: step 2/5. Functionally, catalyzes one of the two ATP producing reactions in the glycolytic pathway via the reversible conversion of 1,3-diphosphoglycerate to 3-phosphoglycerate. Both L- and D- forms of purine and pyrimidine nucleotides can be used as substrates, but the activity is much lower on pyrimidines. In addition to its role as a glycolytic enzyme, it seems that PGK-1 acts as a polymerase alpha cofactor protein (primer recognition protein). Acts as a protein kinase when localized to the mitochondrion where it phosphorylates pyruvate dehydrogenase kinase PDK1 to inhibit pyruvate dehydrogenase complex activity and suppress the formation of acetyl-coenzyme A from pyruvate, and consequently inhibit oxidative phosphorylation and promote glycolysis. May play a role in sperm motility. This is Phosphoglycerate kinase 1 (PGK1) from Sus scrofa (Pig).